Consider the following 1197-residue polypeptide: DNA-directed RNA polymerase subunit beta (1197 aa).

A compositionally biased stretch (polar residues) spans 581–597 (QANSPLNDDGSFTNPTV). 2 disordered regions span residues 581 to 603 (QANSPLNDDGSFTNPTVTARHGD) and 1172 to 1197 (EKPDLFKGDDDDTPRIPATKLDEENV).

The protein belongs to the RNA polymerase beta chain family. In terms of assembly, the RNAP catalytic core consists of 2 alpha, 1 beta, 1 beta' and 1 omega subunit. When a sigma factor is associated with the core the holoenzyme is formed, which can initiate transcription.

The enzyme catalyses RNA(n) + a ribonucleoside 5'-triphosphate = RNA(n+1) + diphosphate. Its function is as follows. DNA-dependent RNA polymerase catalyzes the transcription of DNA into RNA using the four ribonucleoside triphosphates as substrates. In Oenococcus oeni (strain ATCC BAA-331 / PSU-1), this protein is DNA-directed RNA polymerase subunit beta.